Consider the following 424-residue polypeptide: CinA-like protein (424 aa).

This sequence belongs to the CinA family.

The protein is CinA-like protein of Shewanella halifaxensis (strain HAW-EB4).